A 445-amino-acid polypeptide reads, in one-letter code: Transmembrane protein 184C (445 aa).

7 helical membrane-spanning segments follow: residues 15 to 35, 46 to 66, 84 to 104, 177 to 197, 210 to 230, 252 to 272, and 285 to 305; these read LVVLLYIVGLLVVVPLCVWEL, AWFIAGIFLLMTIPISLWGIL, ILWMVPIYSLDSWIALKYPNI, YTVVRPFTTIIALICELVGVY, YLVILNNMSQLFAMYCLVLFY, VVFVSFWQAVLIALLVKVGVI, and AVATGLQDFIICVEMFLAAIA. 2 disordered regions span residues 369–393 and 421–445; these read EHTSLLSSSTQDPISDASSMPSSPM and TSATRDTEESPELMHNSSEKALDRS. Over residues 370–390 the composition is skewed to polar residues; sequence HTSLLSSSTQDPISDASSMPS.

This sequence belongs to the TMEM184 family.

Its subcellular location is the membrane. Functionally, may play a role in cell growth. The chain is Transmembrane protein 184C (TMEM184C) from Gallus gallus (Chicken).